The sequence spans 318 residues: DNA repair nuclease/redox regulator APEX1 (318 aa).

Residues 1 to 59 are disordered; the sequence is MPKRGKKGAVVEDAEEPKTEPEAKKSKAGAKKNEKEAVGEGAVLYEDPPDQKTSPSGKS. The tract at residues 2–33 is necessary for interaction with YBX1, binding to RNA, association together with NPM1 to rRNA, endoribonuclease activity on abasic RNA and localization in the nucleoli; sequence PKRGKKGAVVEDAEEPKTEPEAKKSKAGAKKN. N6-acetyllysine; by EP300 occurs at positions 6 and 7. The Nuclear localization signal (NLS) signature appears at 8 to 13; the sequence is GAVVED. Over residues 16–38 the composition is skewed to basic and acidic residues; the sequence is EPKTEPEAKKSKAGAKKNEKEAV. The interval 23 to 33 is necessary for interaction with NPM1 and for efficient rRNA binding; that stretch reads AKKSKAGAKKN. N6-acetyllysine occurs at positions 27, 31, 32, and 35. The residue at position 54 (S54) is a Phosphoserine. Residues 64–80 carry the Nuclear export signal (NES) motif; that stretch reads ICSWNVDGLRAWIKKKG. The residue at position 65 (C65) is an S-nitrosocysteine; alternate. A disulfide bridge connects residues C65 and C93. D70 lines the Mg(2+) pocket. C93 bears the S-nitrosocysteine; alternate mark. E96 serves as a coordination point for Mg(2+). Y171 is an active-site residue. Residue K197 is modified to N6-acetyllysine. D210 and N212 together coordinate Mg(2+). The Proton donor/acceptor role is filled by D210. A Phosphothreonine; by CDK5 modification is found at T233. Residues 289–318 form a mitochondrial targeting sequence (MTS) region; that stretch reads QSVLPALCDSKIRSKALGSDHCPITLYLAL. Residue D308 coordinates Mg(2+). C310 is subject to S-nitrosocysteine.

It belongs to the DNA repair enzymes AP/ExoA family. As to quaternary structure, monomer. Homodimer; disulfide-linked. Component of the SET complex, composed of at least APEX1, SET, ANP32A, HMGB2, NME1 and TREX1. Associates with the dimer XRCC5/XRCC6 in a DNA-dependent manner. Interacts with SIRT1; the interaction is increased in the context of genotoxic stress. Interacts with HDAC1, HDAC2 and HDAC3; the interactions are not dependent on the APEX1 acetylation status. Interacts with XRCC1; the interaction is induced by SIRT1 and increased with the APEX1 acetylated form. Interacts with NPM1 (via N-terminal domain); the interaction is RNA-dependent and decreases in hydrogen peroxide-damaged cells. Interacts (via N-terminus) with YBX1 (via C-terminus); the interaction is increased in presence of APEX1 acetylated at Lys-6 and Lys-7. Interacts with HNRNPL; the interaction is DNA-dependent. Interacts (via N-terminus) with KPNA1 and KPNA2. Interacts with TXN; the interaction stimulates the FOS/JUN AP-1 complex DNA-binding activity in a redox-dependent manner. Interacts with GZMA, KRT8, MDM2, POLB, PRDX6, PRPF19, RPLP0, TOMM20 and WDR77. Binds to CDK5. Mg(2+) is required as a cofactor. The cofactor is Mn(2+). Post-translationally, phosphorylated. Phosphorylation by kinase PKC or casein kinase CK2 results in enhanced redox activity that stimulates binding of the FOS/JUN AP-1 complex to its cognate binding site. AP-endodeoxyribonuclease activity is not affected by CK2-mediated phosphorylation. Phosphorylation of Thr-233 by CDK5 in response to MPP(+)/MPTP (1-methyl-4-phenylpyridinium) reduces AP-endodeoxyribonuclease activity resulting in accumulation of DNA damage and contributing to neuronal death. Acetylated on Lys-6 and Lys-7. Acetylation is increased by the transcriptional coactivator EP300 acetyltransferase, genotoxic agents like H(2)O(2) and methyl methanesulfonate (MMS). Acetylation increases its binding affinity to the negative calcium response element (nCaRE) DNA promoter. The acetylated form induces a stronger binding of YBX1 to the Y-box sequence in the MDR1 promoter than the unacetylated form. Deacetylated on lysines. Lys-6 and Lys-7 are deacetylated by SIRT1. In terms of processing, cleaved at Lys-31 by granzyme A to create the mitochondrial form; leading in reduction of binding to DNA, AP endodeoxyribonuclease activity, redox activation of transcription factors and to enhanced cell death. Cleaved by granzyme K; leading to intracellular ROS accumulation and enhanced cell death after oxidative stress. Post-translationally, cys-69 and Cys-93 are nitrosylated in response to nitric oxide (NO) and lead to the exposure of the nuclear export signal (NES). Ubiquitinated by MDM2; leading to translocation to the cytoplasm and proteasomal degradation. The mitochondrial form is expressed in liver (at protein level). Thymus.

It is found in the nucleus. It localises to the nucleolus. The protein localises to the nucleus speckle. The protein resides in the endoplasmic reticulum. Its subcellular location is the cytoplasm. It is found in the mitochondrion. The enzyme catalyses Exonucleolytic cleavage in the 3'- to 5'-direction to yield nucleoside 5'-phosphates.. Its activity is regulated as follows. NPM1 stimulates endodeoxyribonuclease activity on double-stranded DNA with AP sites, but inhibits endoribonuclease activity on single-stranded RNA containing AP sites. Its function is as follows. Multifunctional protein that plays a central role in the cellular response to oxidative stress. The two major activities of APEX1 are DNA repair and redox regulation of transcriptional factors. Functions as an apurinic/apyrimidinic (AP) endodeoxyribonuclease in the DNA base excision repair (BER) pathway of DNA lesions induced by oxidative and alkylating agents. Initiates repair of AP sites in DNA by catalyzing hydrolytic incision of the phosphodiester backbone immediately adjacent to the damage, generating a single-strand break with 5'-deoxyribose phosphate and 3'-hydroxyl ends. Also incises at AP sites in the DNA strand of DNA/RNA hybrids, single-stranded DNA regions of R-loop structures, and single-stranded RNA molecules. Has 3'-5' exoribonuclease activity on mismatched deoxyribonucleotides at the 3' termini of nicked or gapped DNA molecules during short-patch BER. Possesses DNA 3' phosphodiesterase activity capable of removing lesions (such as phosphoglycolate) blocking the 3' side of DNA strand breaks. May also play a role in the epigenetic regulation of gene expression by participating in DNA demethylation. Acts as a loading factor for POLB onto non-incised AP sites in DNA and stimulates the 5'-terminal deoxyribose 5'-phosphate (dRp) excision activity of POLB. Plays a role in the protection from granzyme-mediated cellular repair leading to cell death. Also involved in the DNA cleavage step of class switch recombination (CSR). On the other hand, APEX1 also exerts reversible nuclear redox activity to regulate DNA binding affinity and transcriptional activity of transcriptional factors by controlling the redox status of their DNA-binding domain, such as the FOS/JUN AP-1 complex after exposure to IR. Involved in calcium-dependent down-regulation of parathyroid hormone (PTH) expression by binding to negative calcium response elements (nCaREs). Together with HNRNPL or the dimer XRCC5/XRCC6, associates with nCaRE, acting as an activator of transcriptional repression. Stimulates the YBX1-mediated MDR1 promoter activity, when acetylated at Lys-6 and Lys-7, leading to drug resistance. Also acts as an endoribonuclease involved in the control of single-stranded RNA metabolism. Plays a role in regulating MYC mRNA turnover by preferentially cleaving in between UA and CA dinucleotides of the MYC coding region determinant (CRD). In association with NMD1, plays a role in the rRNA quality control process during cell cycle progression. Associates, together with YBX1, on the MDR1 promoter. Together with NPM1, associates with rRNA. Binds DNA and RNA. The chain is DNA repair nuclease/redox regulator APEX1 (APEX1) from Bos taurus (Bovine).